Consider the following 460-residue polypeptide: Gastric inhibitory polypeptide receptor (460 aa).

Positions 1-18 (MPLRLLLLLLWLWGLQWA) are cleaved as a signal peptide. Residues 19–134 (ETDSEGQTTT…DQTLILERLQ (116 aa)) are Extracellular-facing. 3 cysteine pairs are disulfide-bonded: Cys-42/Cys-66, Cys-57/Cys-99, and Cys-80/Cys-114. 3 N-linked (GlcNAc...) asparagine glycosylation sites follow: Asn-58, Asn-68, and Asn-73. Residues 135–155 (IMYTVGYSLSLTTLLLALLIL) form a helical membrane-spanning segment. The Cytoplasmic portion of the chain corresponds to 156 to 166 (SLFRRLHCTRN). The chain crosses the membrane as a helical span at residues 167-185 (YIHMNLFTSFMLRAAAILT). Residues 186–222 (RDQLLPPLGPYTGDQAPTPWNQALAACRTAQIMTQYC) are Extracellular-facing. Residues 223–243 (VGANYTWLLVEGVYLHHLLVI) traverse the membrane as a helical segment. At 244–255 (VGRSEKGHFRCY) the chain is on the cytoplasmic side. The chain crosses the membrane as a helical span at residues 256 to 276 (LLLGWGAPALFVIPWVIVRYL). At 277-297 (RENTQCWERNEVKAIWWIIRT) the chain is on the extracellular side. Residues 298–318 (PILITILINFLIFIRILGILV) traverse the membrane as a helical segment. Topologically, residues 319–337 (SKLRTRQMRCPDYRLRLAR) are cytoplasmic. A helical membrane pass occupies residues 338-358 (STLTLVPLLGVHEVVFAPVTE). Over 359–370 (EQVEGSLRFAKL) the chain is Extracellular. Residues 371–391 (AFEIFLSSFQGFLVSVLYCFI) form a helical membrane-spanning segment. Over 392-460 (NKEVQSEIRQ…PGDEVLESYC (69 aa)) the chain is Cytoplasmic.

Belongs to the G-protein coupled receptor 2 family. As to quaternary structure, may form homodimers and heterodimers with GLP1R. N-glycosylation is required for cell surface expression and lengthens receptor half-life by preventing degradation in the ER.

The protein resides in the cell membrane. This is a receptor for GIP. The activity of this receptor is mediated by G proteins which activate adenylyl cyclase. In Mus musculus (Mouse), this protein is Gastric inhibitory polypeptide receptor (Gipr).